The sequence spans 239 residues: Phosducin-like protein 3 (239 aa).

At Met1 the chain carries N-acetylmethionine. A Phosducin domain is found at 32-180 (EAEEEQRILQ…EGDIKAQFIG (149 aa)). Ser43, Ser234, and Ser236 each carry phosphoserine. The tract at residues 91 to 239 (FGEVLEISGK…MKRDSDSEGD (149 aa)) is thioredoxin fold.

Belongs to the phosducin family. As to quaternary structure, interacts (via thioredoxin fold region) with KDR/VEGFR2 (via juxtamembrane domain). Forms ternary complexes with the chaperonin CCT complex and actin substrate, leading to inhibition of actin folding. Interacts with XIAP (via BIR 3 and RING domain). Interacts with HSP90AA1 and HSP90AB1. In terms of processing, N-terminal methionine acetylation destabilizes the protein.

The protein localises to the cytoplasm. It localises to the perinuclear region. Its subcellular location is the endoplasmic reticulum. Its function is as follows. Acts as a chaperone for the angiogenic VEGF receptor KDR/VEGFR2, increasing its abundance by inhibiting its ubiquitination and degradation. Inhibits the folding activity of the chaperonin-containing T-complex (CCT) which leads to inhibition of cytoskeletal actin folding. Acts as a chaperone during heat shock alongside HSP90 and HSP40/70 chaperone complexes. Modulates the activation of caspases during apoptosis. In Pongo abelii (Sumatran orangutan), this protein is Phosducin-like protein 3 (PDCL3).